Reading from the N-terminus, the 230-residue chain is Ribose-5-phosphate isomerase A (230 aa).

Residues 29 to 32, 85 to 88, and 98 to 101 contribute to the substrate site; these read TGST, DGAD, and KGGG. The active-site Proton acceptor is glutamate 107. Lysine 125 contributes to the substrate binding site.

It belongs to the ribose 5-phosphate isomerase family. Homodimer.

The catalysed reaction is aldehydo-D-ribose 5-phosphate = D-ribulose 5-phosphate. Its pathway is carbohydrate degradation; pentose phosphate pathway; D-ribose 5-phosphate from D-ribulose 5-phosphate (non-oxidative stage): step 1/1. Catalyzes the reversible conversion of ribose-5-phosphate to ribulose 5-phosphate. This chain is Ribose-5-phosphate isomerase A, found in Staphylococcus epidermidis (strain ATCC 35984 / DSM 28319 / BCRC 17069 / CCUG 31568 / BM 3577 / RP62A).